The chain runs to 347 residues: MIKEYYGAETFILNKDFAYILVIGTTDVSLIPGLTIAGATPELTHFTPAADAEYVLLGKCKSINTIPVSPTGIPTPALLTRASLSFINPLKIVVNAGSRIVPKIPYIDLQGEPGKDIRKQALSMEKVNNIIENSIKLGEELSNEYELIMIGESIPAGTTTAMATLLALGYDAMDKVSSASPDNPKELKRKVVEEALRNLPTDPLQRLAKVSDPVLLGVAGTSLGFKGKILLAGGTQMTAAAAIINEFDKNKLKDITIGTTKWIVEDKFADMLSLAKQVGVKVLASMLDLSISAYEGIRAYEKGYVKEGVGAGGSAIMALVKGVSNNTLVRKIDELYGELVGSSNLHI.

The protein belongs to the UPF0284 family.

This Saccharolobus islandicus (strain M.16.27) (Sulfolobus islandicus) protein is UPF0284 protein M1627_0030.